The sequence spans 117 residues: Ribosome-binding factor A (117 aa).

Belongs to the RbfA family. As to quaternary structure, monomer. Binds 30S ribosomal subunits, but not 50S ribosomal subunits or 70S ribosomes.

The protein localises to the cytoplasm. One of several proteins that assist in the late maturation steps of the functional core of the 30S ribosomal subunit. Associates with free 30S ribosomal subunits (but not with 30S subunits that are part of 70S ribosomes or polysomes). Required for efficient processing of 16S rRNA. May interact with the 5'-terminal helix region of 16S rRNA. This is Ribosome-binding factor A from Streptococcus thermophilus (strain CNRZ 1066).